A 330-amino-acid chain; its full sequence is Ferredoxin--NADP reductase (330 aa).

Residues Thr19, Asp38, Gln46, Tyr51, Ala91, Phe129, Asp286, and Ser327 each coordinate FAD.

Belongs to the ferredoxin--NADP reductase type 2 family. In terms of assembly, homodimer. The cofactor is FAD.

It carries out the reaction 2 reduced [2Fe-2S]-[ferredoxin] + NADP(+) + H(+) = 2 oxidized [2Fe-2S]-[ferredoxin] + NADPH. The polypeptide is Ferredoxin--NADP reductase (Nocardioides sp. (strain ATCC BAA-499 / JS614)).